The chain runs to 245 residues: uncharacterized protein (245 aa).

This is an uncharacterized protein from Escherichia coli.